Consider the following 389-residue polypeptide: P2X purinoceptor 4a (389 aa).

Topologically, residues 1–36 (MSESVGCCDSVSQCFFDYYTSKILIIRSKKVGTLNR) are cytoplasmic. Residues 37 to 57 (FTQALVIAYVIGYVCVYNKGY) form a helical membrane-spanning segment. Residues 58 to 343 (QDTDTVLSSV…NIIPTLLNMG (286 aa)) are Extracellular-facing. Positions 70 and 72 each coordinate ATP. Residues Lys70 and Lys72 each coordinate CTP. Residues Asn78 and Asn113 are each glycosylated (N-linked (GlcNAc...) asparagine). Intrachain disulfides connect Cys119/Cys168, Cys129/Cys152, and Cys135/Cys162. A CTP-binding site is contributed by Arg143. Asn187 is a glycosylation site (N-linked (GlcNAc...) asparagine). Positions 189 and 191 each coordinate ATP. CTP is bound at residue Thr189. N-linked (GlcNAc...) asparagine glycosylation occurs at Asn213. Disulfide bonds link Cys220–Cys230 and Cys264–Cys273. Residues Asn296, Arg298, and Lys316 each contribute to the ATP site. 3 residues coordinate CTP: Asn296, Arg298, and Lys316. Residues 344–364 (AGLALLGLVNVICDWIVLTFM) traverse the membrane as a helical segment. Residues 365–389 (KRKQHYKEQKYTYVDDFGLLHNEDK) are Cytoplasmic-facing.

The protein belongs to the P2X receptor family. As to quaternary structure, functional P2XRs are organized as homomeric and heteromeric trimers. Forms homotrimer.

It is found in the cell membrane. The protein localises to the lysosome membrane. It catalyses the reaction K(+)(in) = K(+)(out). It carries out the reaction Na(+)(in) = Na(+)(out). The catalysed reaction is Ca(2+)(in) = Ca(2+)(out). Activated by ATP. pH-dependent and inhibited by acidic pH. In terms of biological role, ATP-gated nonselective transmembrane cation channel permeable to potassium, sodium and calcium. CTP, but not GTP or UTP, functions as a weak affinity agonist for P2RX4. Activated by extracellularly released ATP, it plays multiple role in immunity and central nervous system physiology. Could also function as an ATP-gated cation channel of lysosomal membranes. This is P2X purinoceptor 4a (p2rx4a) from Danio rerio (Zebrafish).